Consider the following 383-residue polypeptide: Ceramide synthase 3 (383 aa).

A helical transmembrane segment spans residues 32–52; that stretch reads VFVKPSHLYVTIPYAFLLLII. A homeobox-like region spans residues 66–127; the sequence is KSFGIKETVR…RSRRNQERPS (62 aa). One can recognise a TLC domain in the interval 130–331; the sequence is KKFQEACWRF…ILKMLNRCIF (202 aa). The next 5 helical transmembrane spans lie at 139–159, 174–194, 205–225, 264–284, and 298–318; these read FAFY…KPWL, LLPS…SLLF, FLAH…SWCA, FFIF…FWIL, and FFSY…HLYW. Residues 319–383 lie on the Cytoplasmic side of the membrane; sequence GYYILKMLNR…HLIPNGQHGH (65 aa). Position 340 is a phosphoserine (Ser-340). Residues 342 to 355 show a composition bias toward acidic residues; it reads DEDYEEEEEEEEEE. The tract at residues 342-363 is disordered; sequence DEDYEEEEEEEEEEATKGKEMD.

As to expression, expressed in the epidermis, where it localizes at the interface between the stratum granulosum and the stratum corneum (at protein level).

It localises to the endoplasmic reticulum membrane. It catalyses the reaction a very long-chain fatty acyl-CoA + a sphingoid base = an N-(very-long-chain fatty acyl)-sphingoid base + CoA + H(+). The enzyme catalyses docosanoyl-CoA + sphinganine = N-docosanoylsphinganine + CoA + H(+). The catalysed reaction is tetracosanoyl-CoA + sphinganine = N-tetracosanoylsphinganine + CoA + H(+). It carries out the reaction hexacosanoyl-CoA + sphinganine = N-hexacosanoylsphinganine + CoA + H(+). It catalyses the reaction 2-hydroxydocosanoyl-CoA + sphinganine = N-(2-hydroxydocosanoyl)-sphinganine + CoA + H(+). The enzyme catalyses 2-hydroxytetracosanoyl-CoA + sphinganine = N-(2-hydroxytetracosanoyl)-sphinganine + CoA + H(+). The catalysed reaction is an ultra-long-chain fatty acyl-CoA + a sphingoid base = an N-(ultra-long-chain-acyl)-sphingoid base + CoA + H(+). It carries out the reaction octacosanoyl-CoA + sphinganine = N-(octacosanoyl)-sphinganine + CoA + H(+). It catalyses the reaction a fatty acyl-CoA + sphing-4-enine = an N-acylsphing-4-enine + CoA + H(+). The enzyme catalyses sphinganine + octadecanoyl-CoA = N-(octadecanoyl)-sphinganine + CoA + H(+). The catalysed reaction is 2-hydroxyoctadecanoyl-CoA + sphinganine = N-(2-hydroxyoctadecanoyl)-sphinganine + CoA + H(+). The protein operates within lipid metabolism; sphingolipid metabolism. Its function is as follows. Ceramide synthase that catalyzes the transfer of the acyl chain from acyl-CoA to a sphingoid base, with high selectivity toward very- and ultra-long-chain fatty acyl-CoA (chain length greater than C22). N-acylates sphinganine and sphingosine bases to form dihydroceramides and ceramides in de novo synthesis and salvage pathways, respectively. It is crucial for the synthesis of ultra-long-chain ceramides in the epidermis, to maintain epidermal lipid homeostasis and terminal differentiation. This chain is Ceramide synthase 3, found in Homo sapiens (Human).